Consider the following 218-residue polypeptide: Putative tRNA methyltransferase MG248 (218 aa).

It belongs to the TrmK family.

It localises to the cytoplasm. This Mycoplasma genitalium (strain ATCC 33530 / DSM 19775 / NCTC 10195 / G37) (Mycoplasmoides genitalium) protein is Putative tRNA methyltransferase MG248.